A 262-amino-acid polypeptide reads, in one-letter code: Phosphonates import ATP-binding protein PhnC 3 (262 aa).

The region spanning 3 to 245 (IQLECLSVTY…ELNRIYGNAE (243 aa)) is the ABC transporter domain. Position 36 to 43 (36 to 43 (GASGSGKS)) interacts with ATP.

It belongs to the ABC transporter superfamily. Phosphonates importer (TC 3.A.1.9.1) family. As to quaternary structure, the complex is composed of two ATP-binding proteins (PhnC), two transmembrane proteins (PhnE) and a solute-binding protein (PhnD).

It localises to the cell inner membrane. The catalysed reaction is phosphonate(out) + ATP + H2O = phosphonate(in) + ADP + phosphate + H(+). Part of the ABC transporter complex PhnCDE involved in phosphonates import. Responsible for energy coupling to the transport system. This is Phosphonates import ATP-binding protein PhnC 3 from Nostoc sp. (strain PCC 7120 / SAG 25.82 / UTEX 2576).